The primary structure comprises 283 residues: Bifunctional protein FolD (283 aa).

NADP(+) contacts are provided by residues 166–168, Ser-191, and Ile-232; that span reads GQS.

This sequence belongs to the tetrahydrofolate dehydrogenase/cyclohydrolase family. As to quaternary structure, homodimer.

The catalysed reaction is (6R)-5,10-methylene-5,6,7,8-tetrahydrofolate + NADP(+) = (6R)-5,10-methenyltetrahydrofolate + NADPH. It carries out the reaction (6R)-5,10-methenyltetrahydrofolate + H2O = (6R)-10-formyltetrahydrofolate + H(+). It functions in the pathway one-carbon metabolism; tetrahydrofolate interconversion. Functionally, catalyzes the oxidation of 5,10-methylenetetrahydrofolate to 5,10-methenyltetrahydrofolate and then the hydrolysis of 5,10-methenyltetrahydrofolate to 10-formyltetrahydrofolate. In Laribacter hongkongensis (strain HLHK9), this protein is Bifunctional protein FolD.